A 307-amino-acid chain; its full sequence is MVAHQKADFKSKWAMVVTVNNLNDKKRADLREFSEWFIETLRLEGAFIGHYFNYEAAPVTIVETLPGNFDSCTNAYQKIHKEHPQVVLVVHILPQSQSNEYEWMKVLASRYGFVRQGLLYDNCANRFQNVETDQNSVFRNMCQWIYRSGTAIVRNEGNACGILHGKDPKPTFDKVLFNSEDIKDSVFKVLHAEEEPRGADQENMLKISGYPGMLNTFGIAQLLTPYRVNGITITGAQSAVVALENKFQVYQAVQDFNGKKLDRNHKLQVSSLVVSSPAVPLEWPSLKKSKKLVEQVGKPIRLSKVSS.

As to quaternary structure, component of the pid-1 variant of the PETISCO complex (also called the pid-3, erh-2, tofu-6, and ife-3 small RNA complex) containing at least pid-1, tofu-6, ife-3, pid-3, and erh-2, which is required for the biogenesis of a class of 21 nucleotide PIWI-interacting RNAs (piRNAs) that possess a uracil residue at the 5'-end (also called 21U-RNAs). Within the complex interacts with pid-1; the interaction is direct. Component of the tost-1 variant of the PETISCO complex (also called the pid-3, erh-2, tofu-6, and ife-3 small RNA complex) containing at least tost-1, tofu-6, ife-3, pid-3, and erh-2, which plays an essential role in embryogenesis. Within the complex interacts with tost-1. Within the pid-1 and tost-1 variants of the PETISCO complexes interacts with tofu-6 (via the RRM domain) and erh-2. In contrast to the pid-1 variant of the PETISCO complex, the tost-1 variant of the PETISCO complex plays a minor role in the biogenesis of 21U-RNAs. Expressed in the germline (at protein level).

It is found in the cytoplasm. Its subcellular location is the perinuclear region. The protein resides in the nucleus. Its function is as follows. Component of the pid-1 and tost-1 variants of the PETISCO complexes, which have roles in the biogenesis of a class of 21 nucleotide PIWI-interacting RNAs (piRNAs) that possess a uracil residue at the 5'-end (also called 21U-RNAs) and embryogenesis, respectively. Within the pid-1 variant of the PETISCO complex may stabilize 21U-RNA precursor molecules. Promotes the biogenesis of 21U-RNAs. Required for chromosome segregation and cell division in early embryos. This chain is Protein pid-3, found in Caenorhabditis elegans.